The following is a 544-amino-acid chain: Formate--tetrahydrofolate ligase (544 aa).

63–70 is an ATP binding site; it reads TPAGEGKS.

Belongs to the formate--tetrahydrofolate ligase family.

The enzyme catalyses (6S)-5,6,7,8-tetrahydrofolate + formate + ATP = (6R)-10-formyltetrahydrofolate + ADP + phosphate. The protein operates within one-carbon metabolism; tetrahydrofolate interconversion. This is Formate--tetrahydrofolate ligase from Fusobacterium nucleatum subsp. nucleatum (strain ATCC 25586 / DSM 15643 / BCRC 10681 / CIP 101130 / JCM 8532 / KCTC 2640 / LMG 13131 / VPI 4355).